The chain runs to 141 residues: Deoxyuridine 5'-triphosphate nucleotidohydrolase (141 aa).

Belongs to the dUTPase family. Mg(2+) serves as cofactor.

The enzyme catalyses dUTP + H2O = dUMP + diphosphate + H(+). Its pathway is pyrimidine metabolism; dUMP biosynthesis; dUMP from dCTP (dUTP route): step 2/2. Its function is as follows. This enzyme is involved in nucleotide metabolism: it produces dUMP, the immediate precursor of thymidine nucleotides and it decreases the intracellular concentration of dUTP so that uracil cannot be incorporated into DNA. The protein is Deoxyuridine 5'-triphosphate nucleotidohydrolase of Chlorella (PBCV-1).